The following is a 67-amino-acid chain: Large ribosomal subunit protein bL35 (67 aa).

This sequence belongs to the bacterial ribosomal protein bL35 family.

The sequence is that of Large ribosomal subunit protein bL35 from Sphingopyxis alaskensis (strain DSM 13593 / LMG 18877 / RB2256) (Sphingomonas alaskensis).